A 710-amino-acid polypeptide reads, in one-letter code: E3 ubiquitin-protein ligase TRIM9 (710 aa).

The RING-type zinc finger occupies 10 to 50 (CPVCGSFYREPIILPCSHNLCQACARNILVQTPESESPQSR). T41 is subject to Phosphothreonine. Residues S44, S46, S49, and S53 each carry the phosphoserine modification. 2 B box-type zinc fingers span residues 163–212 (AAAL…LVPP) and 224–266 (RKVS…VKAL). Zn(2+)-binding residues include C168, C171, C193, H198, C229, H232, C252, and H258. A coiled-coil region spans residues 273-340 (HKSQLSQALN…KAQLLARVNK (68 aa)). The 59-residue stretch at 374-432 (IKENDPSGFLQISDALIRRVHLTEDQWGKGTLTPRMTTDFDLSLDNSPLLQSIHQLDFV) folds into the COS domain. In terms of domain architecture, Fibronectin type-III spans 440–535 (VPATPILQLE…KTLVLQTSEV (96 aa)). The B30.2/SPRY domain maps to 533–702 (SEVAWFAFDP…LHTGLPVPDF (170 aa)).

In terms of assembly, interacts with SNAP25. Post-translationally, auto-ubiquitinated. Brain (at protein level). Expressed in fetal and adult brain.

It is found in the cytoplasmic vesicle. The protein localises to the secretory vesicle. The protein resides in the synaptic vesicle. Its subcellular location is the synapse. It localises to the cytoplasm. It is found in the cytoskeleton. The protein localises to the cell projection. The protein resides in the dendrite. The enzyme catalyses S-ubiquitinyl-[E2 ubiquitin-conjugating enzyme]-L-cysteine + [acceptor protein]-L-lysine = [E2 ubiquitin-conjugating enzyme]-L-cysteine + N(6)-ubiquitinyl-[acceptor protein]-L-lysine.. It participates in protein modification; protein ubiquitination. Functionally, E3 ubiquitin-protein ligase which ubiquitinates itself in cooperation with an E2 enzyme UBE2D2/UBC4 and serves as a targeting signal for proteasomal degradation. May play a role in regulation of neuronal functions. May act as a regulator of synaptic vesicle exocytosis by controlling the availability of SNAP25 for the SNARE complex formation. The polypeptide is E3 ubiquitin-protein ligase TRIM9 (Trim9) (Rattus norvegicus (Rat)).